A 1524-amino-acid chain; its full sequence is Unhealthy ribosome biogenesis protein 2 homolog (1524 aa).

Its subcellular location is the nucleus. It is found in the nucleolus. Its function is as follows. Essential for hematopietic stem cell development through the regulation of p53/TP53 pathway. This Homo sapiens (Human) protein is Unhealthy ribosome biogenesis protein 2 homolog (URB2).